The sequence spans 813 residues: Calpain-7 (813 aa).

Residue Met-1 is modified to N-acetylmethionine. Residue Thr-95 is modified to Phosphothreonine. Residues 232-540 form the Calpain catalytic domain; it reads RERFAYPMPF…YDVIYLSWNP (309 aa). Catalysis depends on residues Cys-290, His-458, and Asn-478. A domain III region spans residues 541–701; that stretch reads GLFKESTCIH…INGKWSGQSA (161 aa). The segment at 702 to 813 is domain N; that stretch reads GGCGNFQETH…IIPIKITQLQ (112 aa).

The protein belongs to the peptidase C2 family. In terms of tissue distribution, ubiquitous.

It localises to the nucleus. Its function is as follows. Calcium-regulated non-lysosomal thiol-protease. The polypeptide is Calpain-7 (CAPN7) (Homo sapiens (Human)).